The primary structure comprises 353 residues: ATPase GET3A (353 aa).

An ATP-binding site is contributed by 27-34 (KGGVGKTT). Asp56 is an active-site residue. ATP is bound by residues Glu226 and Asn253. A coiled-coil region spans residues 320–353 (TTSRSNVEELERKVHTLRLQLKTAEEELERVKSG).

This sequence belongs to the arsA ATPase family. In terms of assembly, homodimer. Interacts with GET1 and GET4.

The protein resides in the cytoplasm. It localises to the cytosol. Its subcellular location is the endoplasmic reticulum. It catalyses the reaction ATP + H2O = ADP + phosphate + H(+). ATPase required for the post-translational delivery of tail-anchored (TA) proteins to the endoplasmic reticulum. Recognizes and selectively binds the transmembrane domain of TA proteins in the cytosol. This complex then targets to the endoplasmic reticulum by membrane-bound receptors, where the tail-anchored protein is released for insertion. This process is regulated by ATP binding and hydrolysis. ATP binding drives the homodimer towards the closed dimer state, facilitating recognition of newly synthesized TA membrane proteins. ATP hydrolysis is required for insertion. Subsequently, the homodimer reverts towards the open dimer state, lowering its affinity for the membrane-bound receptor, and returning it to the cytosol to initiate a new round of targeting. Involved in the control of root hair growth through the regulation of syntaxin SYP123 expression. The sequence is that of ATPase GET3A from Arabidopsis thaliana (Mouse-ear cress).